Here is an 88-residue protein sequence, read N- to C-terminus: uncharacterized protein (88 aa).

The N-terminal stretch at 1–25 (MRAAFWVGCAALLLSACSSEPVQQA) is a signal peptide.

This is an uncharacterized protein from Escherichia coli O6:H1 (strain CFT073 / ATCC 700928 / UPEC).